Here is a 297-residue protein sequence, read N- to C-terminus: Transmembrane protein 169 (297 aa).

The interval Met1–Gly88 is disordered. Residues Met1–His159 are Extracellular-facing. The segment covering Arg22 to Leu31 has biased composition (low complexity). 2 stretches are compositionally biased toward acidic residues: residues Lys61 to Glu70 and Glu78 to Gly88. Residues Val160–Phe180 traverse the membrane as a helical segment. Topologically, residues Tyr181–Leu210 are cytoplasmic. Residues Ile211–Val231 traverse the membrane as a helical segment. Over Ala232 to Val297 the chain is Extracellular.

Its subcellular location is the membrane. The sequence is that of Transmembrane protein 169 (Tmem169) from Mus musculus (Mouse).